The following is a 225-amino-acid chain: Protein GrpE (225 aa).

Residues 1 to 15 (MSGDASTPEQDQNVV) are compositionally biased toward polar residues. Disordered stretches follow at residues 1–48 (MSGD…DRMQ) and 198–225 (VSMGPGPSDPGSAPAEAAAAPDQTAEEA). Over residues 201-225 (GPGPSDPGSAPAEAAAAPDQTAEEA) the composition is skewed to low complexity.

It belongs to the GrpE family. In terms of assembly, homodimer.

It is found in the cytoplasm. Functionally, participates actively in the response to hyperosmotic and heat shock by preventing the aggregation of stress-denatured proteins, in association with DnaK and GrpE. It is the nucleotide exchange factor for DnaK and may function as a thermosensor. Unfolded proteins bind initially to DnaJ; upon interaction with the DnaJ-bound protein, DnaK hydrolyzes its bound ATP, resulting in the formation of a stable complex. GrpE releases ADP from DnaK; ATP binding to DnaK triggers the release of the substrate protein, thus completing the reaction cycle. Several rounds of ATP-dependent interactions between DnaJ, DnaK and GrpE are required for fully efficient folding. The polypeptide is Protein GrpE (Synechococcus sp. (strain CC9605)).